A 425-amino-acid polypeptide reads, in one-letter code: UDP-N-acetylglucosamine 1-carboxyvinyltransferase (425 aa).

23 to 24 (KN) is a binding site for phosphoenolpyruvate. Arg100 contacts UDP-N-acetyl-alpha-D-glucosamine. Catalysis depends on Cys124, which acts as the Proton donor. At Cys124 the chain carries 2-(S-cysteinyl)pyruvic acid O-phosphothioketal. 2 residues coordinate UDP-N-acetyl-alpha-D-glucosamine: Asp313 and Ile335.

The protein belongs to the EPSP synthase family. MurA subfamily.

The protein localises to the cytoplasm. It catalyses the reaction phosphoenolpyruvate + UDP-N-acetyl-alpha-D-glucosamine = UDP-N-acetyl-3-O-(1-carboxyvinyl)-alpha-D-glucosamine + phosphate. It participates in cell wall biogenesis; peptidoglycan biosynthesis. Functionally, cell wall formation. Adds enolpyruvyl to UDP-N-acetylglucosamine. The polypeptide is UDP-N-acetylglucosamine 1-carboxyvinyltransferase (Wolbachia sp. subsp. Brugia malayi (strain TRS)).